Consider the following 444-residue polypeptide: uncharacterized protein (444 aa).

Lys-268 carries the N6-(pyridoxal phosphate)lysine modification.

Belongs to the class-III pyridoxal-phosphate-dependent aminotransferase family. It depends on pyridoxal 5'-phosphate as a cofactor.

This is an uncharacterized protein from Bacillus subtilis (strain 168).